Here is a 103-residue protein sequence, read N- to C-terminus: MANLFIRKMVNPLLYLSRHTVKPRALSTFLFGSIRGAAPVAVEPGAAVRSLLSPGLLPHLLPALGFKNKTVLKKRCKDCYLVKRRGRWYVYCKTHPRHKQRQM.

The protein belongs to the bacterial ribosomal protein bL36 family. Component of the mitochondrial large ribosomal subunit (mt-LSU). Mature mammalian 55S mitochondrial ribosomes consist of a small (28S) and a large (39S) subunit. The 28S small subunit contains a 12S ribosomal RNA (12S mt-rRNA) and 30 different proteins. The 39S large subunit contains a 16S rRNA (16S mt-rRNA), a copy of mitochondrial valine transfer RNA (mt-tRNA(Val)), which plays an integral structural role, and 52 different proteins. bL36m has a zinc binding site.

It is found in the mitochondrion. This Homo sapiens (Human) protein is Large ribosomal subunit protein bL36m (MRPL36).